A 123-amino-acid polypeptide reads, in one-letter code: Ribosome-binding factor A (123 aa).

It belongs to the RbfA family. In terms of assembly, monomer. Binds 30S ribosomal subunits, but not 50S ribosomal subunits or 70S ribosomes.

The protein localises to the cytoplasm. Functionally, one of several proteins that assist in the late maturation steps of the functional core of the 30S ribosomal subunit. Associates with free 30S ribosomal subunits (but not with 30S subunits that are part of 70S ribosomes or polysomes). Required for efficient processing of 16S rRNA. May interact with the 5'-terminal helix region of 16S rRNA. The chain is Ribosome-binding factor A from Neisseria gonorrhoeae (strain NCCP11945).